A 225-amino-acid chain; its full sequence is tRNA (guanine-N(7)-)-methyltransferase (225 aa).

S-adenosyl-L-methionine contacts are provided by Glu56, Glu81, Asp108, and Asp131. Residue Asp131 is part of the active site. Residues Lys135, Asp167, and 204-207 (TKFE) contribute to the substrate site.

The protein belongs to the class I-like SAM-binding methyltransferase superfamily. TrmB family.

It carries out the reaction guanosine(46) in tRNA + S-adenosyl-L-methionine = N(7)-methylguanosine(46) in tRNA + S-adenosyl-L-homocysteine. The protein operates within tRNA modification; N(7)-methylguanine-tRNA biosynthesis. Functionally, catalyzes the formation of N(7)-methylguanine at position 46 (m7G46) in tRNA. The sequence is that of tRNA (guanine-N(7)-)-methyltransferase from Legionella pneumophila (strain Corby).